Consider the following 119-residue polypeptide: NADH-quinone oxidoreductase subunit A (119 aa).

3 consecutive transmembrane segments (helical) span residues Phe7–Gly27, Leu63–Val83, and Ile88–Val108.

It belongs to the complex I subunit 3 family. As to quaternary structure, NDH-1 is composed of 14 different subunits. Subunits NuoA, H, J, K, L, M, N constitute the membrane sector of the complex.

The protein resides in the cell inner membrane. It carries out the reaction a quinone + NADH + 5 H(+)(in) = a quinol + NAD(+) + 4 H(+)(out). In terms of biological role, NDH-1 shuttles electrons from NADH, via FMN and iron-sulfur (Fe-S) centers, to quinones in the respiratory chain. The immediate electron acceptor for the enzyme in this species is believed to be ubiquinone. Couples the redox reaction to proton translocation (for every two electrons transferred, four hydrogen ions are translocated across the cytoplasmic membrane), and thus conserves the redox energy in a proton gradient. This is NADH-quinone oxidoreductase subunit A from Ralstonia nicotianae (strain ATCC BAA-1114 / GMI1000) (Ralstonia solanacearum).